The primary structure comprises 811 residues: Glycerol-3-phosphate acyltransferase (811 aa).

The HXXXXD motif signature appears at 303–308; the sequence is HRSHMD.

Belongs to the GPAT/DAPAT family.

Its subcellular location is the cell inner membrane. It catalyses the reaction sn-glycerol 3-phosphate + an acyl-CoA = a 1-acyl-sn-glycero-3-phosphate + CoA. The protein operates within phospholipid metabolism; CDP-diacylglycerol biosynthesis; CDP-diacylglycerol from sn-glycerol 3-phosphate: step 1/3. The sequence is that of Glycerol-3-phosphate acyltransferase from Haemophilus ducreyi (strain 35000HP / ATCC 700724).